Here is a 143-residue protein sequence, read N- to C-terminus: Large ribosomal subunit protein uL11 (143 aa).

This sequence belongs to the universal ribosomal protein uL11 family. In terms of assembly, part of the ribosomal stalk of the 50S ribosomal subunit. Interacts with L10 and the large rRNA to form the base of the stalk. L10 forms an elongated spine to which L12 dimers bind in a sequential fashion forming a multimeric L10(L12)X complex. Post-translationally, one or more lysine residues are methylated.

Forms part of the ribosomal stalk which helps the ribosome interact with GTP-bound translation factors. This Dechloromonas aromatica (strain RCB) protein is Large ribosomal subunit protein uL11.